Reading from the N-terminus, the 434-residue chain is ATP-dependent RNA helicase RhlB (434 aa).

The short motif at 9–37 (QKFADLGLEPQVLDGLNAKGFINCTPIQA) is the Q motif element. Positions 40-219 (LPVLLAGQDI…FEHMQEPEHV (180 aa)) constitute a Helicase ATP-binding domain. 53 to 60 (AQTGTGKT) provides a ligand contact to ATP. The DEAD box signature appears at 165 to 168 (DEAD). The region spanning 245-390 (ALLQTLIEEE…QSDYDTSALL (146 aa)) is the Helicase C-terminal domain. The segment at 394–434 (PAPIRLQRRPPQNRRNGSNNGQRQSGNRKHSRPRPPRSPQA) is disordered. A compositionally biased stretch (low complexity) spans 406–418 (NRRNGSNNGQRQS). Residues 419–428 (GNRKHSRPRP) show a composition bias toward basic residues.

The protein belongs to the DEAD box helicase family. RhlB subfamily. As to quaternary structure, component of the RNA degradosome, which is a multiprotein complex involved in RNA processing and mRNA degradation.

The protein localises to the cytoplasm. The enzyme catalyses ATP + H2O = ADP + phosphate + H(+). DEAD-box RNA helicase involved in RNA degradation. Has RNA-dependent ATPase activity and unwinds double-stranded RNA. This Aliivibrio salmonicida (strain LFI1238) (Vibrio salmonicida (strain LFI1238)) protein is ATP-dependent RNA helicase RhlB.